The primary structure comprises 123 residues: Large ribosomal subunit protein eL8 (123 aa).

It belongs to the eukaryotic ribosomal protein eL8 family. Part of the 50S ribosomal subunit. Probably part of the RNase P complex.

Its subcellular location is the cytoplasm. In terms of biological role, multifunctional RNA-binding protein that recognizes the K-turn motif in ribosomal RNA, the RNA component of RNase P, box H/ACA, box C/D and box C'/D' sRNAs. The protein is Large ribosomal subunit protein eL8 of Pyrococcus abyssi (strain GE5 / Orsay).